The following is an 869-amino-acid chain: Bifunctional uridylyltransferase/uridylyl-removing enzyme (869 aa).

The tract at residues 1 to 332 (MTDTPAERPD…QFDGEATPEP (332 aa)) is uridylyltransferase. A uridylyl-removing region spans residues 333–691 (LGGGFSLRRG…RRAVPDNDAL (359 aa)). An HD domain is found at 450–572 (VDQHTLMVLR…VGTRERLDYL (123 aa)). 2 ACT domains span residues 692-774 (EVFV…RAVP) and 798-869 (RISL…LDPV).

This sequence belongs to the GlnD family. It depends on Mg(2+) as a cofactor.

The catalysed reaction is [protein-PII]-L-tyrosine + UTP = [protein-PII]-uridylyl-L-tyrosine + diphosphate. It carries out the reaction [protein-PII]-uridylyl-L-tyrosine + H2O = [protein-PII]-L-tyrosine + UMP + H(+). Its activity is regulated as follows. Uridylyltransferase (UTase) activity is inhibited by glutamine, while glutamine activates uridylyl-removing (UR) activity. Functionally, modifies, by uridylylation and deuridylylation, the PII regulatory proteins (GlnB and homologs), in response to the nitrogen status of the cell that GlnD senses through the glutamine level. Under low glutamine levels, catalyzes the conversion of the PII proteins and UTP to PII-UMP and PPi, while under higher glutamine levels, GlnD hydrolyzes PII-UMP to PII and UMP (deuridylylation). Thus, controls uridylylation state and activity of the PII proteins, and plays an important role in the regulation of nitrogen assimilation and metabolism. The chain is Bifunctional uridylyltransferase/uridylyl-removing enzyme from Xanthomonas axonopodis pv. citri (strain 306).